A 1418-amino-acid chain; its full sequence is Alpha-latrotoxin-Lhe1a (1418 aa).

Residues 1 to 20 (MIFVGETMERANHSLVRLRR) form the signal peptide. Residues 17-20 (RLRR) form a furin-like endopeptidase recognition region region. The tract at residues 238–257 (VLYALLYGTQTYISVMFFLL) is helix H8 is the probable transmembrane region of the tetrameric pore inserted in the target cell membrane. Cys-413 and Cys-1066 are oxidised to a cystine. ANK repeat units lie at residues 458–489 (LYNAASNPDSAVGFKEFTKLNYDGANIRATFD), 490–521 (QGRTIFHAVAKSGNDKILFGLTFLVKSTELNQ), 525–554 (KGYTPIHVAADSGNAGIVNLLIQRGVSINS), 559–589 (FLQTPLHLAAQRGFVNTFQRLMESSEININE), 593–622 (DGFTPLHYAVRGGERILEAFMNQIGIDVNA), 626–656 (KGLTPFHLAIIKNDWQVASTLLRNKKVDINA), 660–690 (NNMTALHYAAILGYLETTKQLINLKEINANV), 695–723 (GLLSALHYAILYKHDDVASFLLRSSNVNV), 729–758 (GGITPLHLAVMQGRKQVLSLMFNIGVNIEQ), 762–791 (EKYTPLHLAAMSKYPELIQILLDQDSNFEA), 795–824 (SGATPLHLATFKGKSQAALILLNNEVNWRD), 828–857 (NGQMPIHGAATTGLLDVAQAIISIDATVLD), 862–891 (NSDTPLNLAAQNSHIDAVKYFIDQGADINT), 895–924 (NGHAPLLAFSKKGNLDMVKYLFDKNANVYI), 928–957 (NGMNFFYYAVRNGHLNIIKYAMSEKDKFEW), 971–1003 (EECAISHFAVCDAVQFDKIEIVKFFIGTLGNFN), 1004–1033 (ICGPLHQAARYGHLHIVKYLVEEEVLSVDG), 1035–1064 (KTDTPLCYASENGHLAVVQYLVSNGAKVNH), 1068–1097 (NGMTAIDKAITKNHLQVVQFLAANGVDFRR), 1101–1131 (RGATPFLTAVAENAFDIAEYLIREKRQDINI), 1137–1166 (DKETALHLAVYYKNLQMIKLLVKYGIDVTI), and 1170–1199 (YDKTVLDIATDAKFSNIVKYLKKNSGKFRR). The segment at 1026-1032 (EEVLSVD) is 4C4.1 epitope. Residues 1196-1199 (KFRR) form a furin-like endopeptidase recognition region region. Positions 1200-1418 (EYKSSYGEHS…SEKKIQKISI (219 aa)) are excised as a propeptide.

This sequence belongs to the cationic peptide 01 (latrotoxin) family. 03 (alpha-latrotoxin) subfamily. As to quaternary structure, homotetramer in membranes. Processed by furin-like proteases at both the N- and C-termini. In terms of tissue distribution, expressed in venom gland, cephalothorax, and abdomen tissues from both males and females.

It localises to the secreted. Its subcellular location is the target cell membrane. Functionally, presynaptic neurotoxin that causes massive release of neurotransmitters from vertebrate (but not invertebrate) nerve terminals and endocrine cells via a complex mechanism involving activation of receptor(s) and toxin insertion into the plasma membrane with subsequent pore formation. Binds to neurexin-1-alpha (NRXN1) in a calcium dependent manner, adhesion G protein-coupled receptor L1 (ADGRL1, also termed latrophilin-1 and calcium-independent receptor of latrotoxin (CIRL)), and receptor-type tyrosine-protein phosphatase S (PTPRS), also termed PTP sigma. NRXN1 and PTPRS are suggested to provide a platform for binding and subsequent pore formation events. In contrast, binding to ADGRL1 does not involve oligomerization and channel formation, but direct downstream stimulation of the synaptic fusion machinery. The sequence is that of Alpha-latrotoxin-Lhe1a from Latrodectus hesperus (Western black widow spider).